An 89-amino-acid chain; its full sequence is MTLSADKKQPIIDKFKLHENDTGSPEVQVAILTERINLLTEHLKTHRKDFHSRRGLLKMVGQRRALLNYLRDRAPDRYRKLIQELGLRK.

It belongs to the universal ribosomal protein uS15 family. Part of the 30S ribosomal subunit. Forms a bridge to the 50S subunit in the 70S ribosome, contacting the 23S rRNA.

One of the primary rRNA binding proteins, it binds directly to 16S rRNA where it helps nucleate assembly of the platform of the 30S subunit by binding and bridging several RNA helices of the 16S rRNA. Functionally, forms an intersubunit bridge (bridge B4) with the 23S rRNA of the 50S subunit in the ribosome. In Desulforudis audaxviator (strain MP104C), this protein is Small ribosomal subunit protein uS15.